A 248-amino-acid chain; its full sequence is Putative imidazole glycerol phosphate synthase subunit hisF2 (248 aa).

The active site involves Asp129.

It belongs to the HisA/HisF family. As to quaternary structure, heterodimer of HisH and HisF.

It is found in the cytoplasm. The catalysed reaction is 5-[(5-phospho-1-deoxy-D-ribulos-1-ylimino)methylamino]-1-(5-phospho-beta-D-ribosyl)imidazole-4-carboxamide + L-glutamine = D-erythro-1-(imidazol-4-yl)glycerol 3-phosphate + 5-amino-1-(5-phospho-beta-D-ribosyl)imidazole-4-carboxamide + L-glutamate + H(+). Its pathway is amino-acid biosynthesis; L-histidine biosynthesis; L-histidine from 5-phospho-alpha-D-ribose 1-diphosphate: step 5/9. IGPS catalyzes the conversion of PRFAR and glutamine to IGP, AICAR and glutamate. The HisF subunit catalyzes the cyclization activity that produces IGP and AICAR from PRFAR using the ammonia provided by the HisH subunit. The protein is Putative imidazole glycerol phosphate synthase subunit hisF2 (hisF2) of Campylobacter jejuni subsp. jejuni serotype O:2 (strain ATCC 700819 / NCTC 11168).